Reading from the N-terminus, the 482-residue chain is Glycogen synthase (482 aa).

Lys-18 contributes to the ADP-alpha-D-glucose binding site.

This sequence belongs to the glycosyltransferase 1 family. Bacterial/plant glycogen synthase subfamily.

It carries out the reaction [(1-&gt;4)-alpha-D-glucosyl](n) + ADP-alpha-D-glucose = [(1-&gt;4)-alpha-D-glucosyl](n+1) + ADP + H(+). It functions in the pathway glycan biosynthesis; glycogen biosynthesis. Its function is as follows. Synthesizes alpha-1,4-glucan chains using ADP-glucose. The sequence is that of Glycogen synthase from Rhodopseudomonas palustris (strain HaA2).